We begin with the raw amino-acid sequence, 483 residues long: Glutamyl-tRNA(Gln) amidotransferase subunit A (483 aa).

Catalysis depends on charge relay system residues lysine 75 and serine 150. Serine 174 acts as the Acyl-ester intermediate in catalysis.

This sequence belongs to the amidase family. GatA subfamily. As to quaternary structure, heterotrimer of A, B and C subunits.

It catalyses the reaction L-glutamyl-tRNA(Gln) + L-glutamine + ATP + H2O = L-glutaminyl-tRNA(Gln) + L-glutamate + ADP + phosphate + H(+). In terms of biological role, allows the formation of correctly charged Gln-tRNA(Gln) through the transamidation of misacylated Glu-tRNA(Gln) in organisms which lack glutaminyl-tRNA synthetase. The reaction takes place in the presence of glutamine and ATP through an activated gamma-phospho-Glu-tRNA(Gln). This is Glutamyl-tRNA(Gln) amidotransferase subunit A from Gloeothece citriformis (strain PCC 7424) (Cyanothece sp. (strain PCC 7424)).